The primary structure comprises 324 residues: MENLKIIVINLKRRTDRREIMEKKFQDENITQYEFFEAFDGETLRPEDPILGVFKHGVHGLSRKGVAGCALSHYTVWQKIAADTSGTKYLVLEDDINFKPNFKENLSKVMKTIEPSQAMILIGMTVNGDDVTKTRDIYELDTSYTIHPLGRDYYAGGLFGYILDYRAAQYFVDYISYNGIRIVIDYLTYRSGFPMYESHPHLVYTQSVQHDGEHVDSDIQHQYDRIKYAIIPNTYEFDDYVFIPNKDSAGGDIREVCADIPILKNIADKDINCVAFNTYGWVKNNIKPLHQLIDIGNRYYESDGIYIKKNYLLKEKIIINSLNL.

Belongs to the glycosyltransferase 25 family.

This Acanthamoeba polyphaga (Amoeba) protein is Putative glycosyltransferase R655.